A 422-amino-acid polypeptide reads, in one-letter code: Elongation factor 1-gamma (422 aa).

Positions Met1–Pro82 constitute a GST N-terminal domain. The 129-residue stretch at Ser87 to Val215 folds into the GST C-terminal domain. Residues Glu210–Leu269 are disordered. Over residues Gln223–Ala250 the composition is skewed to basic and acidic residues. Positions Pro262–Lys422 constitute an EF-1-gamma C-terminal domain.

In terms of assembly, EF-1 is composed of four subunits: alpha, beta, delta, and gamma.

Its function is as follows. Probably plays a role in anchoring the complex to other cellular components. The protein is Elongation factor 1-gamma of Prunus avium (Cherry).